The sequence spans 488 residues: GTPase Der (488 aa).

The EngA-type G 1 domain occupies 3 to 166 (PVVALVGRPN…YALAPYAEAL (164 aa)). Residues 9 to 16 (GRPNVGKS), 56 to 60 (DTGGI), and 118 to 121 (NKVD) each bind GTP. Positions 168-191 (LNRDGDEDEDEEEREYSEEEAEAE) are disordered. Acidic residues predominate over residues 172–189 (GDEDEDEEEREYSEEEAE). The 174-residue stretch at 200–373 (IKMAIIGKPN…SVQEAYDSAT (174 aa)) folds into the EngA-type G 2 domain. GTP is bound by residues 206 to 213 (GKPNVGKS), 253 to 257 (DTAGV), and 318 to 321 (NKWD). Residues 374 to 458 (RRVSTSMLTR…PIQIRFQDSA (85 aa)) enclose the KH-like domain.

This sequence belongs to the TRAFAC class TrmE-Era-EngA-EngB-Septin-like GTPase superfamily. EngA (Der) GTPase family. In terms of assembly, associates with the 50S ribosomal subunit.

Its function is as follows. GTPase that plays an essential role in the late steps of ribosome biogenesis. This is GTPase Der from Shewanella sediminis (strain HAW-EB3).